A 275-amino-acid polypeptide reads, in one-letter code: Myb/SANT-like DNA-binding domain-containing protein 3 (275 aa).

Residues 13 to 78 (FSELEKSILL…QLKKCWENIK (66 aa)) form the Myb-like domain. Phosphoserine is present on residues serine 96 and serine 98. Residue lysine 154 forms a Glycyl lysine isopeptide (Lys-Gly) (interchain with G-Cter in SUMO2) linkage. Residues 211–247 (QLIQMNEVHVAKIQQIERECEMAEEEHRIKMEVLNKK) adopt a coiled-coil conformation. Position 274 is a phosphoserine (serine 274).

The protein belongs to the MSANTD3 family. As to expression, expressed in brain.

The chain is Myb/SANT-like DNA-binding domain-containing protein 3 (MSANTD3) from Homo sapiens (Human).